Reading from the N-terminus, the 253-residue chain is Phosphate import ATP-binding protein PstB (253 aa).

Residues 5–248 (IQVRDLNAYY…PSDKRTEDYI (244 aa)) form the ABC transporter domain. ATP is bound at residue 37 to 44 (GPSGCGKS).

Belongs to the ABC transporter superfamily. Phosphate importer (TC 3.A.1.7) family. As to quaternary structure, the complex is composed of two ATP-binding proteins (PstB), two transmembrane proteins (PstC and PstA) and a solute-binding protein (PstS).

The protein localises to the cell inner membrane. The enzyme catalyses phosphate(out) + ATP + H2O = ADP + 2 phosphate(in) + H(+). Its function is as follows. Part of the ABC transporter complex PstSACB involved in phosphate import. Responsible for energy coupling to the transport system. The polypeptide is Phosphate import ATP-binding protein PstB (Koribacter versatilis (strain Ellin345)).